The sequence spans 396 residues: Ornithine aminotransferase 2 (396 aa).

K255 carries the post-translational modification N6-(pyridoxal phosphate)lysine.

This sequence belongs to the class-III pyridoxal-phosphate-dependent aminotransferase family. OAT subfamily. The cofactor is pyridoxal 5'-phosphate.

It localises to the cytoplasm. The enzyme catalyses a 2-oxocarboxylate + L-ornithine = L-glutamate 5-semialdehyde + an L-alpha-amino acid. The protein operates within amino-acid biosynthesis; L-proline biosynthesis; L-glutamate 5-semialdehyde from L-ornithine: step 1/1. Its function is as follows. Catalyzes the interconversion of ornithine to glutamate semialdehyde. The sequence is that of Ornithine aminotransferase 2 from Staphylococcus saprophyticus subsp. saprophyticus (strain ATCC 15305 / DSM 20229 / NCIMB 8711 / NCTC 7292 / S-41).